The sequence spans 149 residues: Large ribosomal subunit protein bL9 (149 aa).

This sequence belongs to the bacterial ribosomal protein bL9 family.

In terms of biological role, binds to the 23S rRNA. The chain is Large ribosomal subunit protein bL9 from Actinobacillus pleuropneumoniae serotype 3 (strain JL03).